Here is a 101-residue protein sequence, read N- to C-terminus: CRISPR-associated endoribonuclease Cas2 (101 aa).

Aspartate 8 contacts Mg(2+).

This sequence belongs to the CRISPR-associated endoribonuclease Cas2 protein family. As to quaternary structure, homodimer, forms a heterotetramer with a Cas1 homodimer. Mg(2+) is required as a cofactor.

Functionally, CRISPR (clustered regularly interspaced short palindromic repeat), is an adaptive immune system that provides protection against mobile genetic elements (viruses, transposable elements and conjugative plasmids). CRISPR clusters contain sequences complementary to antecedent mobile elements and target invading nucleic acids. CRISPR clusters are transcribed and processed into CRISPR RNA (crRNA). Functions as a ssRNA-specific endoribonuclease. Involved in the integration of spacer DNA into the CRISPR cassette. The chain is CRISPR-associated endoribonuclease Cas2 from Parvibaculum lavamentivorans (strain DS-1 / DSM 13023 / NCIMB 13966).